Consider the following 931-residue polypeptide: Protein phosphatase 1 regulatory subunit 37 homolog (931 aa).

The interval 20 to 71 is disordered; that stretch reads TAASSPASPIPPTSPSMFATPPHQQSHSSATSVRKKVCQEANSSADDPDSDA. Over residues 41-51 the composition is skewed to polar residues; sequence PHQQSHSSATS. LRR repeat units lie at residues 232–259, 262–285, 290–314, 323–346, 351–374, 379–407, 409–430, and 435–458; these read AISL…LARA, SASL…VLIC, NTGI…IYQL, LLDL…LRNR, KSAL…SLAE, NTKI…LVSN, HLHR…ILAE, and NTAL…ALHS. Over residues 519-533 the composition is skewed to basic and acidic residues; the sequence is QDHVSEDTEKENKDA. Disordered stretches follow at residues 519-602 and 780-807; these read QDHV…RHQR and PDCT…IRQR. The span at 534 to 547 shows a compositional bias: acidic residues; it reads DNDDKEPENEDGDT. The span at 554–563 shows a compositional bias: low complexity; sequence SDASADQSDS. Composition is skewed to basic and acidic residues over residues 564 to 584 and 790 to 807; these read PADK…EKRP and TTSR…IRQR.

It belongs to the PPP1R37 family.

The chain is Protein phosphatase 1 regulatory subunit 37 homolog from Caenorhabditis briggsae.